The sequence spans 1356 residues: Tenascin-R (1356 aa).

A signal peptide spans 1–31 (MGIEGETVVLKNMLIGVNLILLGSMLKPSEC). N-linked (GlcNAc...) asparagine glycosylation occurs at asparagine 55. Positions 127–157 (CASSAQVLQELLSRIEMLEREVSVLRDQCNT) form a coiled coil. Serine 176 carries an O-linked (Xyl...) (chondroitin sulfate) serine glycan. N-linked (GlcNAc...) asparagine glycans are attached at residues asparagine 180 and asparagine 198. 3 EGF-like domains span residues 188 to 199 (CICNEGWFGKNC), 204 to 230 (CPLG…GDDC), and 235 to 261 (CPTD…GEDC). The O-linked (Xyl...) (chondroitin sulfate) serine glycan is linked to serine 271. N-linked (GlcNAc...) asparagine glycosylation occurs at asparagine 278. 2 consecutive EGF-like domains span residues 281-292 (CLCQEGYAGEDC) and 293-324 (SQRR…PDCS). 2 disulfides stabilise this stretch: cysteine 297/cysteine 307 and cysteine 314/cysteine 323. Serine 302 carries O-linked (Xyl...) (chondroitin sulfate) serine glycosylation. 9 Fibronectin type-III domains span residues 328 to 419 (PPED…TPQG), 420 to 504 (LQFK…TVID), 505 to 596 (GPTQ…IDAP), 597 to 686 (KNLR…TELD), 687 to 776 (SPRD…FRPI), 777 to 864 (SHLH…TGID), 865 to 953 (PPKN…AMDS), 954 to 1040 (PMDL…TLLD), and 1041 to 1129 (PPAN…GGRV). Residues asparagine 391, asparagine 469, and asparagine 580 are each glycosylated (N-linked (GlcNAc...) asparagine). Phosphoserine is present on serine 723. 6 N-linked (GlcNAc...) asparagine glycosylation sites follow: asparagine 790, asparagine 868, asparagine 873, asparagine 1034, asparagine 1044, and asparagine 1259. The Fibrinogen C-terminal domain occupies 1127-1342 (GRVFSHPQDC…FVEMKMRPYI (216 aa)).

This sequence belongs to the tenascin family. Forms oligomers. Interacts with TNC and FN1. Interacts with BCAN and ACAN in a calcium -dependent manner. Interacts with CNTN1, SCN2B, PTPRZ1, and CSPG3. In terms of processing, contains N-linked oligosaccharides, O-linked sialylated structures. Contains O-linked chondroitin sulfate glycosaminoglycans. Contains N-linked oligosaccharides with a sulfated carbohydrate structure type GalNAc-4-SO4 or HNK-1 (SO4-3-GlcUABeta1,3GalBeta1,4GlcNAc). The levels of HNK-1 rise and fall in parallel to those of TNR during postnatal development of the cerebellum. In contrast, levels of GalNAc-4-SO4 are regulated independently from those of TNR, rising late in cerebellar development and continuing into adulthood. Early in postnatal development, GalNAc-4-SO4 is found predominantly on isoform 1, whereas in the adult it is predominantly on isoform 2. In terms of tissue distribution, brain-specific. Expressed in oligodendrocytes and small subsets of neurons (mainly interneurons and motoneurons) of the cerebellum, hippocampus and olfactory bulb. Expressed in dorsal root ganglia.

It is found in the secreted. Its subcellular location is the extracellular space. It localises to the extracellular matrix. Neural extracellular matrix (ECM) protein involved in interactions with different cells and matrix components. Theses interactions can influence cellular behavior by either evoking a stable adhesion and differentiation, or repulsion and inhibition of neurite growth. Binding to cell surface gangliosides inhibits RGD-dependent integrin-mediated cell adhesion and results in an inhibition of PTK2/FAK1 (FAK) phosphorylation and cell detachment. Binding to membrane surface sulfatides results in a oligodendrocyte adhesion and differentiation. Interaction with CNTN1 induces a repulsion of neurons and an inhibition of neurite outgrowth. Interacts with SCN2B may play a crucial role in clustering and regulation of activity of sodium channels at nodes of Ranvier. TNR-linked chondroitin sulfate glycosaminoglycans are involved in the interaction with FN1 and mediates inhibition of cell adhesion and neurite outgrowth. The highly regulated addition of sulfated carbohydrate structure may modulate the adhesive properties of TNR over the course of development and during synapse maintenance. The protein is Tenascin-R (Tnr) of Rattus norvegicus (Rat).